The primary structure comprises 451 residues: Serine--tRNA ligase, cytoplasmic (451 aa).

A disulfide bond links C213 and C244. Residue 238-240 (TAE) participates in L-serine binding. ATP contacts are provided by residues 269-271 (RKE) and V285. An L-serine-binding site is contributed by E292. 358 to 361 (ELVS) is a binding site for ATP. T396 lines the L-serine pocket.

The protein belongs to the class-II aminoacyl-tRNA synthetase family. Type-1 seryl-tRNA synthetase subfamily. As to quaternary structure, homodimer. The tRNA molecule binds across the dimer.

The protein localises to the cytoplasm. It is found in the cytosol. The catalysed reaction is tRNA(Ser) + L-serine + ATP = L-seryl-tRNA(Ser) + AMP + diphosphate + H(+). Functionally, catalyzes the attachment of serine to tRNA(Ser) in a two-step reaction: serine is first activated by ATP to form Ser-AMP and then transferred to the acceptor end of tRNA(Ser). This is Serine--tRNA ligase, cytoplasmic from Arabidopsis thaliana (Mouse-ear cress).